We begin with the raw amino-acid sequence, 361 residues long: uncharacterized protein (361 aa).

WD repeat units lie at residues 57–96, 103–142, 146–184, 187–229, 237–275, and 280–318; these read RHKK…VSSK, KEIS…GIIH, DHID…KPIL, EQDE…DHTD, SHDF…YERI, and SSRS…GDES. Positions 311-361 are disordered; that stretch reads DQKEGDESSSSDNLDSDEDSSSDSEFSSPKKKKKVGNQGKKPLGTDFFDGL.

Its subcellular location is the nucleus. It is found in the nucleolus. This is an uncharacterized protein from Schizosaccharomyces pombe (strain 972 / ATCC 24843) (Fission yeast).